Reading from the N-terminus, the 133-residue chain is Small ribosomal subunit protein uS8 (133 aa).

The protein belongs to the universal ribosomal protein uS8 family. Part of the 30S ribosomal subunit. Contacts proteins S5 and S12.

In terms of biological role, one of the primary rRNA binding proteins, it binds directly to 16S rRNA central domain where it helps coordinate assembly of the platform of the 30S subunit. The polypeptide is Small ribosomal subunit protein uS8 (Deinococcus radiodurans (strain ATCC 13939 / DSM 20539 / JCM 16871 / CCUG 27074 / LMG 4051 / NBRC 15346 / NCIMB 9279 / VKM B-1422 / R1)).